Reading from the N-terminus, the 234-residue chain is Orotidine 5'-phosphate decarboxylase (234 aa).

Substrate contacts are provided by residues Asp11, Lys33, 60–69 (DLKFHDIPNT), Thr120, Arg181, Gln190, Gly210, and Arg211. The active-site Proton donor is Lys62.

This sequence belongs to the OMP decarboxylase family. Type 1 subfamily. Homodimer.

The enzyme catalyses orotidine 5'-phosphate + H(+) = UMP + CO2. It functions in the pathway pyrimidine metabolism; UMP biosynthesis via de novo pathway; UMP from orotate: step 2/2. Functionally, catalyzes the decarboxylation of orotidine 5'-monophosphate (OMP) to uridine 5'-monophosphate (UMP). The sequence is that of Orotidine 5'-phosphate decarboxylase from Aliivibrio fischeri (strain ATCC 700601 / ES114) (Vibrio fischeri).